The chain runs to 320 residues: Cytochrome f (320 aa).

The N-terminal stretch at 1–35 (MENRNTFSWVKEQMTRSISVSIMIYVITRTSISNA) is a signal peptide. Heme is bound by residues Y36, C56, C59, and H60. The chain crosses the membrane as a helical span at residues 286–306 (VQGLLFFFASVILAQVFLVLK).

It belongs to the cytochrome f family. As to quaternary structure, the 4 large subunits of the cytochrome b6-f complex are cytochrome b6, subunit IV (17 kDa polypeptide, petD), cytochrome f and the Rieske protein, while the 4 small subunits are PetG, PetL, PetM and PetN. The complex functions as a dimer. Requires heme as cofactor.

It is found in the plastid. The protein localises to the chloroplast thylakoid membrane. Component of the cytochrome b6-f complex, which mediates electron transfer between photosystem II (PSII) and photosystem I (PSI), cyclic electron flow around PSI, and state transitions. This Oryza nivara (Indian wild rice) protein is Cytochrome f.